A 160-amino-acid polypeptide reads, in one-letter code: Ribosomal RNA large subunit methyltransferase H (160 aa).

S-adenosyl-L-methionine contacts are provided by residues Leu76, Gly108, and 127 to 132 (LGKMTW).

This sequence belongs to the RNA methyltransferase RlmH family. Homodimer.

The protein resides in the cytoplasm. The catalysed reaction is pseudouridine(1915) in 23S rRNA + S-adenosyl-L-methionine = N(3)-methylpseudouridine(1915) in 23S rRNA + S-adenosyl-L-homocysteine + H(+). In terms of biological role, specifically methylates the pseudouridine at position 1915 (m3Psi1915) in 23S rRNA. The polypeptide is Ribosomal RNA large subunit methyltransferase H (Rhizobium etli (strain CIAT 652)).